Reading from the N-terminus, the 521-residue chain is Lysine--tRNA ligase (521 aa).

A 'HIGH' region motif is present at residues 32–40 (PSGTVHIGN). A 'KMSKS' region motif is present at residues 280-284 (KISSS).

It belongs to the class-I aminoacyl-tRNA synthetase family.

The protein resides in the cytoplasm. It catalyses the reaction tRNA(Lys) + L-lysine + ATP = L-lysyl-tRNA(Lys) + AMP + diphosphate. This is Lysine--tRNA ligase (lysS) from Borreliella burgdorferi (strain ATCC 35210 / DSM 4680 / CIP 102532 / B31) (Borrelia burgdorferi).